The primary structure comprises 887 residues: Probable dual specificity protein kinase madd-3 (887 aa).

5 disordered regions span residues 77 to 147 (PIKS…ISAA), 163 to 299 (AQPP…PKAL), 313 to 333 (LPQS…STGG), 347 to 475 (TTIC…KSAA), and 504 to 533 (RKPS…QHQD). Over residues 108-118 (PTQNPVQLPLP) the composition is skewed to low complexity. Basic and acidic residues predominate over residues 121–130 (VSEKPGDKKS). A compositionally biased stretch (polar residues) spans 177 to 192 (SETNSGSGPVSKQVSG). The segment covering 217 to 241 (SSASTRAKAASAVAPEANPAPVPTA) has biased composition (low complexity). Composition is skewed to polar residues over residues 314–332 (PQSS…TSTG) and 356–366 (NVPSTSQPQQG). Over residues 367–377 (DNEKRLIEKKL) the composition is skewed to basic and acidic residues. Residues 407–419 (LSSNLTTTNNNNN) are compositionally biased toward low complexity. Polar residues predominate over residues 439–462 (FSTQAGSGNATTVDDPASTTTSKE). In terms of domain architecture, Protein kinase spans 551 to 863 (FTIYDTLGEG…LPEALQHRYF (313 aa)). Residues 557–565 (LGEGTFGKV) and Lys-580 each bind ATP. The active-site Proton acceptor is the Asp-677.

Belongs to the protein kinase superfamily. CMGC Ser/Thr protein kinase family. Lammer subfamily. As to expression, expressed in body wall, vulval and anal depressor muscles.

The protein localises to the cytoplasm. It is found in the nucleus. In terms of biological role, probable dual specificity kinase acting on both serine/threonine and tyrosine-containing substrates. Negatively regulates p38 MAPK signaling to allow for the plasma membrane of body wall muscle cells to form projections, also called muscle arms, that extend and connect the body wall muscles to target motor neurons. Negative regulation of p38 MAPK signaling may in turn modulate the trafficking of the muscle specific receptor eva-1 to the lysosome, to ensure proper display of the eva-1 receptor on the plasma membrane of muscle cells and allow for muscle arm extension towards guidance cues. The sequence is that of Probable dual specificity protein kinase madd-3 from Caenorhabditis elegans.